The following is a 541-amino-acid chain: Chaperonin GroEL (541 aa).

Residues 29-32 (TLGP), 86-90 (DGTTT), glycine 413, 476-478 (NAA), and aspartate 492 contribute to the ATP site. The tract at residues 521–541 (KPEDNPAPAAPAANPGMGGMM) is disordered. Over residues 526–535 (PAPAAPAANP) the composition is skewed to low complexity.

Belongs to the chaperonin (HSP60) family. As to quaternary structure, forms a cylinder of 14 subunits composed of two heptameric rings stacked back-to-back. Interacts with the co-chaperonin GroES.

The protein resides in the cytoplasm. The catalysed reaction is ATP + H2O + a folded polypeptide = ADP + phosphate + an unfolded polypeptide.. Together with its co-chaperonin GroES, plays an essential role in assisting protein folding. The GroEL-GroES system forms a nano-cage that allows encapsulation of the non-native substrate proteins and provides a physical environment optimized to promote and accelerate protein folding. The protein is Chaperonin GroEL of Levilactobacillus brevis (strain ATCC 367 / BCRC 12310 / CIP 105137 / JCM 1170 / LMG 11437 / NCIMB 947 / NCTC 947) (Lactobacillus brevis).